The primary structure comprises 83 residues: Putative membrane protein insertion efficiency factor (83 aa).

It belongs to the UPF0161 family.

The protein localises to the cell membrane. In terms of biological role, could be involved in insertion of integral membrane proteins into the membrane. The polypeptide is Putative membrane protein insertion efficiency factor (Staphylococcus saprophyticus subsp. saprophyticus (strain ATCC 15305 / DSM 20229 / NCIMB 8711 / NCTC 7292 / S-41)).